The sequence spans 445 residues: Phosphoglucosamine mutase (445 aa).

The active-site Phosphoserine intermediate is the Ser-99. Positions 99, 242, 244, and 246 each coordinate Mg(2+). At Ser-99 the chain carries Phosphoserine.

It belongs to the phosphohexose mutase family. Mg(2+) is required as a cofactor. In terms of processing, activated by phosphorylation.

It carries out the reaction alpha-D-glucosamine 1-phosphate = D-glucosamine 6-phosphate. Its function is as follows. Catalyzes the conversion of glucosamine-6-phosphate to glucosamine-1-phosphate. The sequence is that of Phosphoglucosamine mutase from Campylobacter jejuni subsp. jejuni serotype O:23/36 (strain 81-176).